The chain runs to 216 residues: Probable GTP-binding protein EngB (216 aa).

One can recognise an EngB-type G domain in the interval 27 to 201; that stretch reads EGIEVAFAGR…SQKLNTWFNE (175 aa). Residues 35-42, 62-66, 80-83, 147-150, and 180-182 contribute to the GTP site; these read GRSNAGKS, GRTQL, DLPG, TKAD, and FSS. Residues serine 42 and threonine 64 each contribute to the Mg(2+) site.

Belongs to the TRAFAC class TrmE-Era-EngA-EngB-Septin-like GTPase superfamily. EngB GTPase family. Mg(2+) is required as a cofactor.

Necessary for normal cell division and for the maintenance of normal septation. The polypeptide is Probable GTP-binding protein EngB (Serratia proteamaculans (strain 568)).